The primary structure comprises 148 residues: Putative anti-anti-sigma factor Rv2638 (148 aa).

The 112-residue stretch at 30–141 (LRATTDGSGA…PTVDTALGKG (112 aa)) folds into the STAS domain.

This sequence belongs to the anti-sigma-factor antagonist family. Interacts with unphosphorylated OprA.

In Mycobacterium tuberculosis (strain ATCC 25618 / H37Rv), this protein is Putative anti-anti-sigma factor Rv2638.